Here is a 64-residue protein sequence, read N- to C-terminus: Large ribosomal subunit protein uL29 (64 aa).

This sequence belongs to the universal ribosomal protein uL29 family.

The sequence is that of Large ribosomal subunit protein uL29 from Cupriavidus necator (strain ATCC 17699 / DSM 428 / KCTC 22496 / NCIMB 10442 / H16 / Stanier 337) (Ralstonia eutropha).